The sequence spans 746 residues: Protein zyg-11 homolog (746 aa).

3 LRR repeats span residues 185–209 (LPRL…GLRS), 216–241 (MHQL…VLQH), and 265–289 (LPQL…AFVE).

This sequence belongs to the zyg-11 family.

Serves as substrate adapter subunit in an E3 ubiquitin ligase complex zyg11-cul2-elongin BC. Targets substrates bearing N-terminal glycine degrons for proteasomal degradation. This Danio rerio (Zebrafish) protein is Protein zyg-11 homolog (zyg11).